The sequence spans 296 residues: CDP-diacylglycerol--glycerol-3-phosphate 3-phosphatidyltransferase 1, chloroplastic/mitochondrial (296 aa).

Residues 1–39 (MLRSGLASLIVDVNLRRTLRPSPTFSFPAHLSRCIITSR) constitute a chloroplast and mitochondrion transit peptide. The span at 62–82 (FSSSSSSEQSRPTSSSRNSFS) shows a compositional bias: low complexity. The tract at residues 62–103 (FSSSSSSEQSRPTSSSRNSFSGHGQLDSDDNSSPPPSQSSSK) is disordered. Transmembrane regions (helical) follow at residues 104–124 (VLTL…LLVA), 126–146 (FYVD…AAAI), 164–184 (FGAF…LILL), 189–209 (IQVA…IAII), and 261–281 (VGWL…LSVW).

This sequence belongs to the CDP-alcohol phosphatidyltransferase class-I family. The cofactor is Mn(2+).

It localises to the plastid. Its subcellular location is the chloroplast membrane. The protein localises to the mitochondrion membrane. The enzyme catalyses a CDP-1,2-diacyl-sn-glycerol + sn-glycerol 3-phosphate = a 1,2-diacyl-sn-glycero-3-phospho-(1'-sn-glycero-3'-phosphate) + CMP + H(+). It functions in the pathway phospholipid metabolism; phosphatidylglycerol biosynthesis; phosphatidylglycerol from CDP-diacylglycerol: step 1/2. Its function is as follows. Catalyzes the committed step to the synthesis of the acidic phospholipids, including phosphatidylglycerol (PG). Transfers specifically a phosphatidyl group from CDP-diacylglycerol to glycerol-3-phosphate to form phosphatidylglycerophosphate. Cannot catalyze the phosphatidyl group transfer to inositol, serine, choline or phosphatidylglycerol. Possesses high activity with CDP-dipalmitoylglycerol and low activity with CDP-dioleoylglycerol. Essential for chloroplast differentiation and PG accumulation in thylakoids, an essential process for the assembly of antenna-reaction center complexes to optimize energy transfer from antenna pigments, and for subsequent photochemical efficiency of photosystem II (PSII). During cold acclimation (at 5 degrees Celsius), necessary for the photosystem I (PSI) photochemistry, including both reaction center and light-harvesting integrity. But dispensable in mitochondrion, being redundant with PGPS2 for the production of PG and its derivative cardiolipin (CL) in mitochondrial membranes. Together with PGPS2, required for the proper embryo development by providing PG accurate levels. This chain is CDP-diacylglycerol--glycerol-3-phosphate 3-phosphatidyltransferase 1, chloroplastic/mitochondrial, found in Arabidopsis thaliana (Mouse-ear cress).